Here is a 507-residue protein sequence, read N- to C-terminus: Transcription factor NIGTH1 (507 aa).

Disordered regions lie at residues 139 to 172 (ASAA…TALD) and 238 to 268 (SREA…RKAR). The span at 152 to 161 (PKEHSEHHPL) shows a compositional bias: basic and acidic residues. The HTH myb-type domain occupies 263-323 (PHRKARRCWS…HLQKYRLHTR (61 aa)). Positions 294-319 (PKQIRELMKVDGLTNDEVKSHLQKYR) form a DNA-binding region, H-T-H motif. Residues 402 to 507 (AVAPPPPLPP…TTTSAGAINY (106 aa)) are disordered. The span at 412–433 (QQQLAPPYSAKSSASARLGSPD) shows a compositional bias: low complexity. Residues 437–446 (RGSGGGGGAA) show a composition bias toward gly residues. The span at 456 to 476 (ESIEEEGEGEEREDDDDDDEM) shows a compositional bias: acidic residues.

Interacts with ACA5.

The protein localises to the nucleus. Its function is as follows. Probable transcription factor that may play a role in regulatory networks controlling development and metabolism. The protein is Transcription factor NIGTH1 of Oryza sativa subsp. japonica (Rice).